Consider the following 451-residue polypeptide: Enolase (451 aa).

Glutamine 163 lines the (2R)-2-phosphoglycerate pocket. The active-site Proton donor is the glutamate 205. Mg(2+) contacts are provided by aspartate 258, glutamate 308, and aspartate 335. Residues lysine 360, arginine 389, serine 390, and lysine 411 each contribute to the (2R)-2-phosphoglycerate site. Lysine 360 serves as the catalytic Proton acceptor.

The protein belongs to the enolase family. It depends on Mg(2+) as a cofactor.

It is found in the cytoplasm. Its subcellular location is the secreted. The protein resides in the cell surface. It catalyses the reaction (2R)-2-phosphoglycerate = phosphoenolpyruvate + H2O. It functions in the pathway carbohydrate degradation; glycolysis; pyruvate from D-glyceraldehyde 3-phosphate: step 4/5. In terms of biological role, catalyzes the reversible conversion of 2-phosphoglycerate (2-PG) into phosphoenolpyruvate (PEP). It is essential for the degradation of carbohydrates via glycolysis. This is Enolase from Mycoplasma mycoides subsp. mycoides SC (strain CCUG 32753 / NCTC 10114 / PG1).